Consider the following 546-residue polypeptide: ATP-dependent RNA helicase DBP2 (546 aa).

Residues 1–56 (MTYGGRDQQYNKTNYKSRGGDFRGGRNSDRNSYNDRPQGGNYRGGFGGRSNYNQPQ) are disordered. Residues Arg-18 and Arg-43 each carry the omega-N-methylarginine modification. Over residues 18-33 (RGGDFRGGRNSDRNSY) the composition is skewed to basic and acidic residues. Residues Ser-88 and Ser-90 each carry the phosphoserine modification. A Q motif motif is present at residues 113–141 (TTFDEAGFPDYVLNEVKAEGFDKPTGIQC). In terms of domain architecture, Helicase ATP-binding spans 144-319 (WPMALSGRDM…ADYLNDPIQV (176 aa)). ATP is bound at residue 157–164 (AATGSGKT). A DEAD box motif is present at residues 267–270 (DEAD). A Helicase C-terminal domain is found at 347-494 (RLNKYLETAS…NIPPELLKYD (148 aa)). Lys-474 is covalently cross-linked (Glycyl lysine isopeptide (Lys-Gly) (interchain with G-Cter in ubiquitin)). Positions 493 to 546 (YDRRSYGGGHPRYGGGRGGRGGYGRRGGYGGGRGGYGGNRQRDGGWGNRGRSNY) are disordered. The span at 498–540 (YGGGHPRYGGGRGGRGGYGRRGGYGGGRGGYGGNRQRDGGWGN) shows a compositional bias: gly residues. Positions 505–530 (YGGGRGGRGGYGRRGGYGGGRGGYGG) are RNA-binding RGG-box. Residues Arg-509, Arg-512, Arg-518, and Arg-525 each carry the dimethylated arginine; alternate modification. Arg-509, Arg-512, Arg-518, and Arg-525 each carry omega-N-methylarginine; alternate.

This sequence belongs to the DEAD box helicase family. DDX5/DBP2 subfamily. As to quaternary structure, interacts with UPF1. Associates with polysomes.

Its subcellular location is the cytoplasm. The protein resides in the nucleus. It carries out the reaction ATP + H2O = ADP + phosphate + H(+). Its function is as follows. ATP-dependent RNA helicase involved nonsense-mediated mRNA decay and ribosome biogenesis through rRNA processing. Associates directly with chromatin, correlating with transcriptional activity. Required for assembly of mRNA-binding proteins YRA1, NAB2, and MEX67 onto poly(A)+ RNA. The polypeptide is ATP-dependent RNA helicase DBP2 (Saccharomyces cerevisiae (strain ATCC 204508 / S288c) (Baker's yeast)).